The sequence spans 115 residues: MSQALGAYRNGLRAARVAFKGDLRMLMAARQQMRESMVNPPNPELPPDQQIKLMNDVAQFLRQNVVQGKRTKDDKYHLNIHKDTELGDNETIKTTKKTLAAQGGGCCGGGAGLYK.

The N-terminal 35 residues, 1 to 35 (MSQALGAYRNGLRAARVAFKGDLRMLMAARQQMRE), are a transit peptide targeting the mitochondrion.

Belongs to the complex I LYR family. MZM1 subfamily. In terms of assembly, interacts with RIP1.

It is found in the mitochondrion matrix. Its function is as follows. Assembly factor required for Rieske Fe-S protein RIP1 incorporation into the cytochrome b-c1 (CIII) complex. Functions as a chaperone, binding to this subunit within the mitochondrial matrix and stabilizing it prior to its translocation and insertion into the late CIII dimeric intermediate within the mitochondrial inner membrane. Modulates the mitochondrial matrix zinc pool. In Kluyveromyces lactis (strain ATCC 8585 / CBS 2359 / DSM 70799 / NBRC 1267 / NRRL Y-1140 / WM37) (Yeast), this protein is Mitochondrial zinc maintenance protein 1, mitochondrial (MZM1).